A 145-amino-acid polypeptide reads, in one-letter code: Large ribosomal subunit protein uL11 (145 aa).

Belongs to the universal ribosomal protein uL11 family. In terms of assembly, part of the ribosomal stalk of the 50S ribosomal subunit. Interacts with L10 and the large rRNA to form the base of the stalk. L10 forms an elongated spine to which L12 dimers bind in a sequential fashion forming a multimeric L10(L12)X complex. In terms of processing, one or more lysine residues are methylated.

Its function is as follows. Forms part of the ribosomal stalk which helps the ribosome interact with GTP-bound translation factors. The polypeptide is Large ribosomal subunit protein uL11 (Sulfurihydrogenibium sp. (strain YO3AOP1)).